The sequence spans 66 residues: Toxin BeM14 (66 aa).

The LCN-type CS-alpha/beta domain maps to 2–66; that stretch reads RDAYIADDRN…IRKIPGEECR (65 aa). Intrachain disulfides connect Cys12-Cys65, Cys16-Cys36, Cys22-Cys46, and Cys26-Cys48.

Belongs to the long (4 C-C) scorpion toxin superfamily. Sodium channel inhibitor family. Alpha subfamily. In terms of tissue distribution, expressed by the venom gland.

It localises to the secreted. Its function is as follows. Alpha toxins bind voltage-independently at site-3 of sodium channels (Nav) and inhibit the inactivation of the activated channels, thereby blocking neuronal transmission. Has paralytic activity in mice. The sequence is that of Toxin BeM14 from Mesobuthus eupeus (Lesser Asian scorpion).